The primary structure comprises 85 residues: MRPVVSTGKAWCCTVLSAFGVVILSVIAHLFNTNHESFVGSINDPEDGPAVAHTVYLAALVYLVFFVFCGFQVYLARRKPSIELR.

Residues 1-10 are Lumenal-facing; that stretch reads MRPVVSTGKA. Residues 11-31 traverse the membrane as a helical segment; sequence WCCTVLSAFGVVILSVIAHLF. The Cytoplasmic portion of the chain corresponds to 32-54; that stretch reads NTNHESFVGSINDPEDGPAVAHT. The helical transmembrane segment at 55–75 threads the bilayer; the sequence is VYLAALVYLVFFVFCGFQVYL. Residues 76–85 lie on the Lumenal side of the membrane; it reads ARRKPSIELR.

V-ATPase is a heteromultimeric enzyme composed of a peripheral catalytic V1 complex (components A to H) attached to an integral membrane V0 proton pore complex (components: a, c, c', c'', d, e, f and VOA1).

Its subcellular location is the endoplasmic reticulum membrane. The protein localises to the vacuole membrane. Functionally, accessory component of the V0 complex of vacuolar(H+)-ATPase (V-ATPase), a multisubunit enzyme composed of a peripheral complex (V1) that hydrolyzes ATP and a membrane integral complex (V0) that translocates protons. V-ATPase is responsible for acidifying and maintaining the pH of intracellular compartments. This Saccharomyces cerevisiae (strain ATCC 204508 / S288c) (Baker's yeast) protein is V-type proton ATPase subunit f.